Reading from the N-terminus, the 397-residue chain is Phosphopentomutase (397 aa).

Residues D12, D289, H294, D330, H331, and H342 each coordinate Mn(2+).

Belongs to the phosphopentomutase family. Mn(2+) is required as a cofactor.

It is found in the cytoplasm. It carries out the reaction 2-deoxy-alpha-D-ribose 1-phosphate = 2-deoxy-D-ribose 5-phosphate. The catalysed reaction is alpha-D-ribose 1-phosphate = D-ribose 5-phosphate. It participates in carbohydrate degradation; 2-deoxy-D-ribose 1-phosphate degradation; D-glyceraldehyde 3-phosphate and acetaldehyde from 2-deoxy-alpha-D-ribose 1-phosphate: step 1/2. In terms of biological role, isomerase that catalyzes the conversion of deoxy-ribose 1-phosphate (dRib-1-P) and ribose 1-phosphate (Rib-1-P) to deoxy-ribose 5-phosphate (dRib-5-P) and ribose 5-phosphate (Rib-5-P), respectively. The protein is Phosphopentomutase of Limosilactobacillus reuteri (strain DSM 20016) (Lactobacillus reuteri).